Here is a 101-residue protein sequence, read N- to C-terminus: MILEHVLVLSAYLFSIGIYGLITSRNMVRALMCLELILNAVNINFVTFSDFFDNRQLKGDIFSIFVIAIAAAEAAIGLAIVSSIYRNRKSTRINQSNLLNN.

Helical transmembrane passes span 2–22 (ILEH…YGLI), 32–52 (MCLE…SDFF), and 61–81 (IFSI…LAIV).

The protein belongs to the complex I subunit 4L family. In terms of assembly, NDH is composed of at least 16 different subunits, 5 of which are encoded in the nucleus.

It is found in the plastid. The protein resides in the chloroplast thylakoid membrane. The catalysed reaction is a plastoquinone + NADH + (n+1) H(+)(in) = a plastoquinol + NAD(+) + n H(+)(out). It carries out the reaction a plastoquinone + NADPH + (n+1) H(+)(in) = a plastoquinol + NADP(+) + n H(+)(out). Functionally, NDH shuttles electrons from NAD(P)H:plastoquinone, via FMN and iron-sulfur (Fe-S) centers, to quinones in the photosynthetic chain and possibly in a chloroplast respiratory chain. The immediate electron acceptor for the enzyme in this species is believed to be plastoquinone. Couples the redox reaction to proton translocation, and thus conserves the redox energy in a proton gradient. This is NAD(P)H-quinone oxidoreductase subunit 4L, chloroplastic from Nicotiana sylvestris (Wood tobacco).